The chain runs to 370 residues: Cysteine-type anaerobic sulfatase-maturating enzyme (370 aa).

The 227-residue stretch at 1–227 (MPPLSLLIKP…LKNLFDFWYE (227 aa)) folds into the Radical SAM core domain. [4Fe-4S] cluster contacts are provided by C15 and C19. S-adenosyl-L-methionine is bound at residue Y21. C22 serves as a coordination point for [4Fe-4S] cluster. Positions 66, 122, 134, and 195 each coordinate S-adenosyl-L-methionine. Residues C255, C261, and C276 each coordinate [4Fe-4S] cluster. Residue D277 is the Proton acceptor of the active site. [4Fe-4S] cluster-binding residues include C317, C320, C326, C330, and C348.

This sequence belongs to the radical SAM superfamily. Anaerobic sulfatase-maturating enzyme family. In terms of assembly, monomer. [4Fe-4S] cluster serves as cofactor.

It catalyses the reaction L-cysteinyl-[sulfatase] + S-adenosyl-L-methionine + H2O = 3-oxo-L-alanyl-[sulfatase] + hydrogen sulfide + 5'-deoxyadenosine + L-methionine + 2 H(+). It functions in the pathway protein modification; sulfatase oxidation. In terms of biological role, involved in 'Cys-type' sulfatase maturation under anaerobic conditions. Catalyzes the post-translational modification of cysteine ('Cys-51' in the arylsulfatase CPF_0221) into 3-oxoalanine (also known as C(alpha)-formylglycine (FGly)), by a free radical chemical mechanism initiated via the reductive cleavage of S-adenosyl-L-methionine (SAM). Is also able to oxidize a serine residue in a synthetic substrate to FGly in vitro, and in a serine variant of a Cys-type sulfatase in vivo, but this activity is not physiological. Converts threonyl peptides to the corresponding ketone product, and also allo-threonyl peptides, but with a significantly reduced efficiency. This Clostridium perfringens (strain ATCC 13124 / DSM 756 / JCM 1290 / NCIMB 6125 / NCTC 8237 / Type A) protein is Cysteine-type anaerobic sulfatase-maturating enzyme.